The chain runs to 411 residues: Na(+)-translocating NADH-quinone reductase subunit B (411 aa).

A run of 3 helical transmembrane segments spans residues 56 to 76, 120 to 140, and 166 to 186; these read MMIT…YNVG, ALGA…CTIW, and IVPP…GIIV. T233 is modified (FMN phosphoryl threonine). 5 helical membrane-spanning segments follow: residues 272 to 292, 294 to 314, 319 to 339, 348 to 368, and 378 to 398; these read VSTL…IAAW, IIAG…LIGS, MFSM…GMVF, SFTN…AVLI, and GMML…YIVV.

Belongs to the NqrB/RnfD family. In terms of assembly, composed of six subunits; NqrA, NqrB, NqrC, NqrD, NqrE and NqrF. The cofactor is FMN.

The protein localises to the cell inner membrane. It catalyses the reaction a ubiquinone + n Na(+)(in) + NADH + H(+) = a ubiquinol + n Na(+)(out) + NAD(+). In terms of biological role, NQR complex catalyzes the reduction of ubiquinone-1 to ubiquinol by two successive reactions, coupled with the transport of Na(+) ions from the cytoplasm to the periplasm. NqrA to NqrE are probably involved in the second step, the conversion of ubisemiquinone to ubiquinol. The chain is Na(+)-translocating NADH-quinone reductase subunit B from Haemophilus influenzae (strain 86-028NP).